Consider the following 1524-residue polypeptide: DNA polymerase alpha catalytic subunit (1524 aa).

2 disordered regions span residues 1–53 (MSGD…QKPI) and 68–139 (RRRE…KVNP). Over residues 20–30 (SSRKDTLERLK) the composition is skewed to basic and acidic residues. The segment covering 79–96 (EDGEGGDLGYLDEGEEED) has biased composition (acidic residues). Positions 1333, 1336, 1375, 1378, 1414, 1419, 1440, and 1446 each coordinate Zn(2+). The segment at 1333-1378 (CPSCSTAFNCPSIISSVCASISKKPATPETEESDSTFWLKLHCPKC) adopts a CysA-type zinc-finger fold. The CysB motif signature appears at 1414 to 1446 (CEDESCKHTTRSPNFRLLGERERGTVCPNYPNC).

It belongs to the DNA polymerase type-B family.

The protein resides in the nucleus. The enzyme catalyses DNA(n) + a 2'-deoxyribonucleoside 5'-triphosphate = DNA(n+1) + diphosphate. Functionally, polymerase alpha in a complex with DNA primase is a replicative polymerase. The protein is DNA polymerase alpha catalytic subunit (POLA) of Arabidopsis thaliana (Mouse-ear cress).